The chain runs to 327 residues: Protein hunchback (327 aa).

3 consecutive C2H2-type zinc fingers follow at residues histidine 1–histidine 5, phenylalanine 11–histidine 33, and tyrosine 39–histidine 63. Disordered stretches follow at residues lysine 91 to phenylalanine 121, proline 143 to proline 170, and glutamate 182 to serine 290. Basic and acidic residues-rich tracts occupy residues threonine 205–aspartate 216 and leucine 265–aspartate 276. 2 consecutive C2H2-type zinc fingers follow at residues tyrosine 297–histidine 319 and phenylalanine 325–cysteine 327.

Belongs to the hunchback C2H2-type zinc-finger protein family.

Its subcellular location is the nucleus. Gap class segmentation protein that controls development of head structures. The chain is Protein hunchback (hb) from Manduca sexta (Tobacco hawkmoth).